We begin with the raw amino-acid sequence, 302 residues long: Sulfate adenylyltransferase subunit 2 (302 aa).

Belongs to the PAPS reductase family. CysD subfamily. As to quaternary structure, heterodimer composed of CysD, the smaller subunit, and CysN.

The enzyme catalyses sulfate + ATP + H(+) = adenosine 5'-phosphosulfate + diphosphate. The protein operates within sulfur metabolism; hydrogen sulfide biosynthesis; sulfite from sulfate: step 1/3. In terms of biological role, with CysN forms the ATP sulfurylase (ATPS) that catalyzes the adenylation of sulfate producing adenosine 5'-phosphosulfate (APS) and diphosphate, the first enzymatic step in sulfur assimilation pathway. APS synthesis involves the formation of a high-energy phosphoric-sulfuric acid anhydride bond driven by GTP hydrolysis by CysN coupled to ATP hydrolysis by CysD. The protein is Sulfate adenylyltransferase subunit 2 of Buchnera aphidicola subsp. Acyrthosiphon pisum (strain 5A).